The following is a 132-amino-acid chain: Sec-independent protein translocase protein TatB (132 aa).

A helical transmembrane segment spans residues 2 to 22; that stretch reads FDGIGFMELLLIGILGLVVLG. Residues 68 to 132 form a disordered region; that stretch reads ENQGLKDLSP…VSANPDKSNR (65 aa). Residues 102-122 are compositionally biased toward low complexity; that stretch reads TPSASSSAPSESTPSEAPTAE.

Belongs to the TatB family. The Tat system comprises two distinct complexes: a TatABC complex, containing multiple copies of TatA, TatB and TatC subunits, and a separate TatA complex, containing only TatA subunits. Substrates initially bind to the TatABC complex, which probably triggers association of the separate TatA complex to form the active translocon.

The protein resides in the cell inner membrane. Functionally, part of the twin-arginine translocation (Tat) system that transports large folded proteins containing a characteristic twin-arginine motif in their signal peptide across membranes. Together with TatC, TatB is part of a receptor directly interacting with Tat signal peptides. TatB may form an oligomeric binding site that transiently accommodates folded Tat precursor proteins before their translocation. The protein is Sec-independent protein translocase protein TatB of Shewanella woodyi (strain ATCC 51908 / MS32).